Reading from the N-terminus, the 334-residue chain is Tryptophan--tRNA ligase (334 aa).

ATP is bound by residues 11–13 and 19–20; these read QPS and GN. Residues 12–20 carry the 'HIGH' region motif; it reads PSGELTIGN. Position 135 (D135) interacts with L-tryptophan. ATP-binding positions include 147-149, V186, and 195-199; these read GED and KMSKS. The 'KMSKS' region signature appears at 195 to 199; it reads KMSKS.

This sequence belongs to the class-I aminoacyl-tRNA synthetase family. As to quaternary structure, homodimer.

The protein resides in the cytoplasm. It catalyses the reaction tRNA(Trp) + L-tryptophan + ATP = L-tryptophyl-tRNA(Trp) + AMP + diphosphate + H(+). Functionally, catalyzes the attachment of tryptophan to tRNA(Trp). This Escherichia coli O157:H7 protein is Tryptophan--tRNA ligase.